A 607-amino-acid chain; its full sequence is UvrABC system protein C (607 aa).

The region spanning 16–94 (GRPGVYRMFD…IKEWRPPYNI (79 aa)) is the GIY-YIG domain. Residues 203-238 (NALSDELNASMEKAAMALDFERAAELRDQVALLRRV) form the UVR domain.

It belongs to the UvrC family. Interacts with UvrB in an incision complex.

It is found in the cytoplasm. Its function is as follows. The UvrABC repair system catalyzes the recognition and processing of DNA lesions. UvrC both incises the 5' and 3' sides of the lesion. The N-terminal half is responsible for the 3' incision and the C-terminal half is responsible for the 5' incision. The sequence is that of UvrABC system protein C from Pseudomonas syringae pv. tomato (strain ATCC BAA-871 / DC3000).